The sequence spans 250 residues: Diphthine synthase (250 aa).

Residues Leu-9, Asp-85, Val-88, 113–114 (SI), Leu-165, Ala-202, and His-227 each bind S-adenosyl-L-methionine.

Belongs to the diphthine synthase family. As to quaternary structure, homodimer.

It catalyses the reaction 2-[(3S)-amino-3-carboxypropyl]-L-histidyl-[translation elongation factor 2] + 3 S-adenosyl-L-methionine = diphthine-[translation elongation factor 2] + 3 S-adenosyl-L-homocysteine + 3 H(+). It functions in the pathway protein modification; peptidyl-diphthamide biosynthesis. Its function is as follows. S-adenosyl-L-methionine-dependent methyltransferase that catalyzes the trimethylation of the amino group of the modified target histidine residue in translation elongation factor 2 (EF-2), to form an intermediate called diphthine. The three successive methylation reactions represent the second step of diphthamide biosynthesis. This Methanoregula boonei (strain DSM 21154 / JCM 14090 / 6A8) protein is Diphthine synthase.